The following is a 231-amino-acid chain: Adenosylcobinamide-GDP ribazoletransferase (231 aa).

The next 6 helical transmembrane spans lie at 24 to 44 (LWAF…ILYL), 46 to 66 (LPLS…LLHL), 96 to 116 (IAGL…LQLL), 159 to 176 (LALG…VVLF), 181 to 198 (LAGI…RISL), and 209 to 229 (LGAT…LVWW).

The protein belongs to the CobS family. Requires Mg(2+) as cofactor.

Its subcellular location is the cell membrane. It catalyses the reaction alpha-ribazole + adenosylcob(III)inamide-GDP = adenosylcob(III)alamin + GMP + H(+). The enzyme catalyses alpha-ribazole 5'-phosphate + adenosylcob(III)inamide-GDP = adenosylcob(III)alamin 5'-phosphate + GMP + H(+). Its pathway is cofactor biosynthesis; adenosylcobalamin biosynthesis; adenosylcobalamin from cob(II)yrinate a,c-diamide: step 7/7. Its function is as follows. Joins adenosylcobinamide-GDP and alpha-ribazole to generate adenosylcobalamin (Ado-cobalamin). Also synthesizes adenosylcobalamin 5'-phosphate from adenosylcobinamide-GDP and alpha-ribazole 5'-phosphate. The protein is Adenosylcobinamide-GDP ribazoletransferase of Thermococcus kodakarensis (strain ATCC BAA-918 / JCM 12380 / KOD1) (Pyrococcus kodakaraensis (strain KOD1)).